Here is a 344-residue protein sequence, read N- to C-terminus: MTLPRPTSPHIRGPLRTPAIMRLVLGACVPGLFTLTWLYGAGTLLNLAWAGLVALACEAAMLALRKRPPGMFLKDGSALVTALLLAVALPPCAPWLLTLVATGFALIFGKHLYGGLGQNPFNPAMLGYVVALVSFPLEMTRWPSPGSAPGLADSLHAFLGLAVQPDAWAHATALDVLKTDRSLTVDELFAADPAFGHLGGAGGEWVNLAFLLGGLFLLWRRLFTWHAPLGMLAGLFAMSLLFWNGSGSDSHGSPLFHLFSGATMLGAFFIVTDPVSGATSNRGRLLFGLGVGVLTYLIRAWGGYPDGVAFAVLLMNLAAPTIDYYTRPRTYGHRKAERGFRRGD.

Transmembrane regions (helical) follow at residues 23-43, 44-64, 80-100, and 120-140; these read LVLG…GAGT, LLNL…MLAL, VTAL…LTLV, and PFNP…LEMT. T172 is subject to FMN phosphoryl threonine. Transmembrane regions (helical) follow at residues 198–218, 222–242, 252–272, 285–305, and 306–326; these read LGGA…LFLL, LFTW…SLLF, GSPL…FIVT, LLFG…GGYP, and DGVA…DYYT.

The protein belongs to the NqrB/RnfD family. In terms of assembly, the complex is composed of six subunits: RnfA, RnfB, RnfC, RnfD, RnfE and RnfG. The cofactor is FMN.

The protein resides in the cell inner membrane. In terms of biological role, part of a membrane-bound complex that couples electron transfer with translocation of ions across the membrane. The polypeptide is Ion-translocating oxidoreductase complex subunit D (Pseudomonas paraeruginosa (strain DSM 24068 / PA7) (Pseudomonas aeruginosa (strain PA7))).